We begin with the raw amino-acid sequence, 520 residues long: Maturase K (520 aa).

This sequence belongs to the intron maturase 2 family. MatK subfamily.

The protein localises to the plastid. The protein resides in the chloroplast. Functionally, usually encoded in the trnK tRNA gene intron. Probably assists in splicing its own and other chloroplast group II introns. This chain is Maturase K, found in Linum perenne (Perennial flax).